The primary structure comprises 458 residues: GTPase Obg (458 aa).

The 157-residue stretch at 1–157 folds into the Obg domain; the sequence is MSFLDRVKIY…ITLYLELKVL (157 aa). In terms of domain architecture, OBG-type G spans 158 to 326; the sequence is ADLGLVGFPN…VLNEIVKVIS (169 aa). GTP contacts are provided by residues 164-171, 189-193, 210-213, 280-283, and 307-309; these read GFPNAGKS, FTTLN, DIPG, NKAD, and SAA. Mg(2+) contacts are provided by Ser171 and Thr191. An OCT domain is found at 341–419; the sequence is AVHGVEPLFK…VGQKEFEWSG (79 aa). The interval 420–458 is disordered; sequence TELDSERAEQPDFEGYKRRTTQAERLEKRRQRRLKKEEK. Over residues 423–446 the composition is skewed to basic and acidic residues; sequence DSERAEQPDFEGYKRRTTQAERLE. Basic residues predominate over residues 447–458; sequence KRRQRRLKKEEK.

Belongs to the TRAFAC class OBG-HflX-like GTPase superfamily. OBG GTPase family. As to quaternary structure, monomer. The cofactor is Mg(2+).

Its subcellular location is the cytoplasm. Functionally, an essential GTPase which binds GTP, GDP and possibly (p)ppGpp with moderate affinity, with high nucleotide exchange rates and a fairly low GTP hydrolysis rate. Plays a role in control of the cell cycle, stress response, ribosome biogenesis and in those bacteria that undergo differentiation, in morphogenesis control. In Elusimicrobium minutum (strain Pei191), this protein is GTPase Obg.